The sequence spans 300 residues: Ribosomal protein bS6--L-glutamate ligase (300 aa).

One can recognise an ATP-grasp domain in the interval 104–287 (MQLLARQGID…IAGKMIRWIE (184 aa)). ATP contacts are provided by residues Lys-141, 178–179 (EY), Asp-187, and 211–213 (RSN). Residues Asp-248, Glu-260, and Asn-262 each contribute to the Mg(2+) site. The Mn(2+) site is built by Asp-248, Glu-260, and Asn-262.

This sequence belongs to the RimK family. It depends on Mg(2+) as a cofactor. Mn(2+) is required as a cofactor.

Functionally, an L-glutamate ligase that catalyzes the ATP-dependent post-translational addition of glutamate residues to the C-terminus of ribosomal protein bS6 (RpsF). Is also able to catalyze the synthesis of poly-alpha-glutamate in vitro, via ATP hydrolysis from unprotected glutamate as substrate. The number of glutamate residues added to either RpsF or to poly-alpha-glutamate changes with pH. The sequence is that of Ribosomal protein bS6--L-glutamate ligase from Escherichia coli O7:K1 (strain IAI39 / ExPEC).